The following is a 151-amino-acid chain: MLP-like protein 168 (151 aa).

It belongs to the MLP family.

The chain is MLP-like protein 168 (MLP168) from Arabidopsis thaliana (Mouse-ear cress).